The chain runs to 79 residues: Eumenine mastoparan-OD (79 aa).

A signal peptide spans 1 to 24 (MKQTIVIVLLAAVAMMACLQMVAA). AXPX repeat units lie at residues 24–27 (AEPL), 30–33 (AAPA), 44–47 (ASPI), 52–55 (ANPE), and 58–61 (ASPE). Residues 25 to 62 (EPLPEAAPAPSPLAEAEALASPIAEALANPEALASPEA) constitute a propeptide that is removed on maturation. At leucine 76 the chain carries Leucine amide.

As to expression, expressed by the venom gland.

The protein localises to the secreted. It is found in the target cell membrane. Antimicrobial peptide with strong activity against the fungi C.albicans (MIC=6 uM) and B.cinerea (MIC=10 uM), and weaker activity against the Gram-negative bacterium E.coli (MIC=97 uM) and Gram-positive bacterium S.aureus (MIC=97 uM). Shows cytolytic activity against insect cell lines. Has potent hemolytic activity against ovine erythrocytes (80% at 50 uM), but has no hemolytic activity against human erythrocytes. In vivo, peptide injection in the vicinity of the head and thorax of lepidopteran larvae induces feeding disorder that lasts one or two days before recovering. The polypeptide is Eumenine mastoparan-OD (Orancistrocerus drewseni (Solitary wasp)).